Reading from the N-terminus, the 556-residue chain is Phosphoenolpyruvate-protein phosphotransferase (556 aa).

Histidine 186 serves as the catalytic Tele-phosphohistidine intermediate. The phosphoenolpyruvate site is built by arginine 288 and arginine 325. The Mg(2+) site is built by glutamate 415 and aspartate 439. Residues 438–439 (ND) and arginine 449 each bind phosphoenolpyruvate. Catalysis depends on cysteine 486, which acts as the Proton donor.

The protein belongs to the PEP-utilizing enzyme family. Homodimer. Requires Mg(2+) as cofactor.

Its subcellular location is the cytoplasm. It carries out the reaction L-histidyl-[protein] + phosphoenolpyruvate = N(pros)-phospho-L-histidyl-[protein] + pyruvate. General (non sugar-specific) component of the phosphoenolpyruvate-dependent sugar phosphotransferase system (sugar PTS). This major carbohydrate active-transport system catalyzes the phosphorylation of incoming sugar substrates concomitantly with their translocation across the cell membrane. Enzyme I transfers the phosphoryl group from phosphoenolpyruvate (PEP) to the phosphoryl carrier protein (HPr). This chain is Phosphoenolpyruvate-protein phosphotransferase (ptsI), found in Streptomyces coelicolor (strain ATCC BAA-471 / A3(2) / M145).